The chain runs to 133 residues: UPF0102 protein AB57_1130 (133 aa).

Belongs to the UPF0102 family.

The polypeptide is UPF0102 protein AB57_1130 (Acinetobacter baumannii (strain AB0057)).